Here is a 256-residue protein sequence, read N- to C-terminus: Isoprenyl transferase (256 aa).

Residues 1 to 22 (MLEKFSKWKGNRSNHTTPSHSL) form a disordered region. Asp36 is a catalytic residue. Position 36 (Asp36) interacts with Mg(2+). Substrate contacts are provided by residues 37–40 (GNGR), Trp41, Arg49, His53, and 81–83 (STE). Asn84 functions as the Proton acceptor in the catalytic mechanism. Substrate contacts are provided by residues Trp85, Arg87, Arg204, and 210–212 (RLS). Glu223 is a binding site for Mg(2+).

It belongs to the UPP synthase family. Homodimer. It depends on Mg(2+) as a cofactor.

Functionally, catalyzes the condensation of isopentenyl diphosphate (IPP) with allylic pyrophosphates generating different type of terpenoids. In Halalkalibacterium halodurans (strain ATCC BAA-125 / DSM 18197 / FERM 7344 / JCM 9153 / C-125) (Bacillus halodurans), this protein is Isoprenyl transferase.